A 248-amino-acid chain; its full sequence is 4-hydroxy-tetrahydrodipicolinate reductase (248 aa).

Asp28 lines the NAD(+) pocket. Lys29 provides a ligand contact to NADP(+). NAD(+) contacts are provided by residues 78-80 (ATT) and 102-105 (SYNM). The active-site Proton donor/acceptor is the His134. Position 135 (His135) interacts with (S)-2,3,4,5-tetrahydrodipicolinate. The active-site Proton donor is the Lys138. 144 to 145 (GT) contributes to the (S)-2,3,4,5-tetrahydrodipicolinate binding site.

Belongs to the DapB family.

The protein localises to the cytoplasm. It carries out the reaction (S)-2,3,4,5-tetrahydrodipicolinate + NAD(+) + H2O = (2S,4S)-4-hydroxy-2,3,4,5-tetrahydrodipicolinate + NADH + H(+). The enzyme catalyses (S)-2,3,4,5-tetrahydrodipicolinate + NADP(+) + H2O = (2S,4S)-4-hydroxy-2,3,4,5-tetrahydrodipicolinate + NADPH + H(+). It participates in amino-acid biosynthesis; L-lysine biosynthesis via DAP pathway; (S)-tetrahydrodipicolinate from L-aspartate: step 4/4. Its function is as follows. Catalyzes the conversion of 4-hydroxy-tetrahydrodipicolinate (HTPA) to tetrahydrodipicolinate. The protein is 4-hydroxy-tetrahydrodipicolinate reductase of Exiguobacterium sibiricum (strain DSM 17290 / CCUG 55495 / CIP 109462 / JCM 13490 / 255-15).